The chain runs to 614 residues: Ankyrin repeat domain-containing protein 55 (614 aa).

The interval 1-20 (MMRQATMDFSTPSVFDQQRG) is disordered. Over residues 7 to 16 (MDFSTPSVFD) the composition is skewed to polar residues. ANK repeat units lie at residues 26–55 (VDLTMVYQAASNGDVNALTAVIREDPSILE), 60–89 (EGCTPLMHAVSGRQADTVKLLLKMGANINM), 93–125 (YGRTSLCLATYLGWLEGCVSLLRNGAKHNIPDK), 126–157 (NGRLPLHAATAEPDMRLLTVLLQQSNISEINH), 161–190 (EGMTPLHWAAFHNQPQHTQMLLKKGADPTL), 194–223 (DFKTALHWAVQSGNRILCSIILSHHQGPSI), 230–260 (SGKTCVHIAAAAGFSDIIHELARVPECNLQA), 264–293 (DDRTPLHWAAAAGKAECVQSLLELGMDSNL), and 297–326 (NESTPLAYALYCGHTACVKLLSQESRTEPT). Disordered regions lie at residues 319-339 (QESRTEPTRPPPSQSSRPQKK), 354-375 (KKEEQRAHQKDPSRDRYREEDT), 454-476 (TSHAGLSSAPHHMAQRSQKSRSE), and 564-614 (RNNL…SDEN). The span at 354 to 373 (KKEEQRAHQKDPSRDRYREE) shows a compositional bias: basic and acidic residues. A Phosphoserine modification is found at serine 475.

In Homo sapiens (Human), this protein is Ankyrin repeat domain-containing protein 55 (ANKRD55).